Reading from the N-terminus, the 218-residue chain is 3,4-dihydroxy-2-butanone 4-phosphate synthase (218 aa).

D-ribulose 5-phosphate-binding positions include 37 to 38 (RE), Asp-42, 150 to 154 (RGGHT), and Glu-174. Glu-38 provides a ligand contact to Mg(2+). His-153 is a Mg(2+) binding site.

It belongs to the DHBP synthase family. As to quaternary structure, homodimer. The cofactor is Mg(2+). Mn(2+) serves as cofactor.

The catalysed reaction is D-ribulose 5-phosphate = (2S)-2-hydroxy-3-oxobutyl phosphate + formate + H(+). It functions in the pathway cofactor biosynthesis; riboflavin biosynthesis; 2-hydroxy-3-oxobutyl phosphate from D-ribulose 5-phosphate: step 1/1. Catalyzes the conversion of D-ribulose 5-phosphate to formate and 3,4-dihydroxy-2-butanone 4-phosphate. This is 3,4-dihydroxy-2-butanone 4-phosphate synthase from Erwinia tasmaniensis (strain DSM 17950 / CFBP 7177 / CIP 109463 / NCPPB 4357 / Et1/99).